Reading from the N-terminus, the 376-residue chain is Queuine tRNA-ribosyltransferase (376 aa).

Residue Asp-90 is the Proton acceptor of the active site. Substrate-binding positions include 90-94, Asp-144, Gln-193, and Gly-220; that span reads DSGGF. The segment at 251 to 257 is RNA binding; sequence GVGTPED. The active-site Nucleophile is the Asp-270. Residues 275–279 are RNA binding; important for wobble base 34 recognition; sequence TRNAR. The Zn(2+) site is built by Cys-308, Cys-310, Cys-313, and His-339.

The protein belongs to the queuine tRNA-ribosyltransferase family. As to quaternary structure, homodimer. Within each dimer, one monomer is responsible for RNA recognition and catalysis, while the other monomer binds to the replacement base PreQ1. Zn(2+) is required as a cofactor.

The catalysed reaction is 7-aminomethyl-7-carbaguanine + guanosine(34) in tRNA = 7-aminomethyl-7-carbaguanosine(34) in tRNA + guanine. The protein operates within tRNA modification; tRNA-queuosine biosynthesis. Its function is as follows. Catalyzes the base-exchange of a guanine (G) residue with the queuine precursor 7-aminomethyl-7-deazaguanine (PreQ1) at position 34 (anticodon wobble position) in tRNAs with GU(N) anticodons (tRNA-Asp, -Asn, -His and -Tyr). Catalysis occurs through a double-displacement mechanism. The nucleophile active site attacks the C1' of nucleotide 34 to detach the guanine base from the RNA, forming a covalent enzyme-RNA intermediate. The proton acceptor active site deprotonates the incoming PreQ1, allowing a nucleophilic attack on the C1' of the ribose to form the product. After dissociation, two additional enzymatic reactions on the tRNA convert PreQ1 to queuine (Q), resulting in the hypermodified nucleoside queuosine (7-(((4,5-cis-dihydroxy-2-cyclopenten-1-yl)amino)methyl)-7-deazaguanosine). This chain is Queuine tRNA-ribosyltransferase, found in Campylobacter concisus (strain 13826).